A 253-amino-acid polypeptide reads, in one-letter code: Phycoerythrobilin:ferredoxin oxidoreductase (253 aa).

It belongs to the HY2 family.

It catalyses the reaction (3Z)-phycoerythrobilin + oxidized 2[4Fe-4S]-[ferredoxin] = 15,16-dihydrobiliverdin + reduced 2[4Fe-4S]-[ferredoxin] + 2 H(+). Its function is as follows. Catalyzes the two-electron reduction of the C2 and C3(1) diene system of 15,16-dihydrobiliverdin. This is Phycoerythrobilin:ferredoxin oxidoreductase from Prochlorococcus marinus (strain MIT 9301).